The primary structure comprises 374 residues: MDALCEANGTFAINLLKMLGEEDHLRNVFFSPLSLSSVLTMVLMGAKGNTAAQMSQALCLNESGDVHRGFQSLLREVSTSGPKCLLRTANRLFGEKTCDFLPAFKESCQKFYQADLEELSFAEDTEECRKHINDWVMEKTDGKISEILGAGTVSPLTKLVLVNAIYFKGKWNEQFDRKHTRGMPFKTNQEKKTVQMMFKQAKFKMGHVEEVPAQVLELPYVGAELSMLILLPDENTDLAVVEKALTYEKFRTWTSPEKLTEEKVQVFLPRLKLEASYDLEAFLRSLGMTDAFEEAKADFSGMSAKKNVPMSKVAHKCFVEVNEEGTEAAGATAVVRNSRCCRMEPKFCADHPFLFFIRHRETNSILFCGRFSSP.

It belongs to the serpin family. Ov-serpin subfamily.

The protein resides in the cytoplasm. Has an important role in epithelial desmosome-mediated cell-cell adhesion. This is Serpin B8 (SERPINB8) from Bos taurus (Bovine).